The sequence spans 194 residues: dTTP/UTP pyrophosphatase (194 aa).

D73 acts as the Proton acceptor in catalysis.

Belongs to the Maf family. YhdE subfamily. A divalent metal cation is required as a cofactor.

The protein resides in the cytoplasm. It catalyses the reaction dTTP + H2O = dTMP + diphosphate + H(+). The catalysed reaction is UTP + H2O = UMP + diphosphate + H(+). Functionally, nucleoside triphosphate pyrophosphatase that hydrolyzes dTTP and UTP. May have a dual role in cell division arrest and in preventing the incorporation of modified nucleotides into cellular nucleic acids. The polypeptide is dTTP/UTP pyrophosphatase (Clostridium botulinum (strain Loch Maree / Type A3)).